The sequence spans 264 residues: S-adenosylmethionine decarboxylase proenzyme (264 aa).

Catalysis depends on Ser-114, which acts as the Schiff-base intermediate with substrate; via pyruvic acid. A Pyruvic acid (Ser); by autocatalysis modification is found at Ser-114. His-119 acts as the Proton acceptor; for processing activity in catalysis. The active-site Proton donor; for catalytic activity is the Cys-142.

Belongs to the prokaryotic AdoMetDC family. Type 2 subfamily. Heterooctamer of four alpha and four beta chains arranged as a tetramer of alpha/beta heterodimers. The cofactor is pyruvate. Post-translationally, is synthesized initially as an inactive proenzyme. Formation of the active enzyme involves a self-maturation process in which the active site pyruvoyl group is generated from an internal serine residue via an autocatalytic post-translational modification. Two non-identical subunits are generated from the proenzyme in this reaction, and the pyruvate is formed at the N-terminus of the alpha chain, which is derived from the carboxyl end of the proenzyme. The post-translation cleavage follows an unusual pathway, termed non-hydrolytic serinolysis, in which the side chain hydroxyl group of the serine supplies its oxygen atom to form the C-terminus of the beta chain, while the remainder of the serine residue undergoes an oxidative deamination to produce ammonia and the pyruvoyl group blocking the N-terminus of the alpha chain.

It carries out the reaction S-adenosyl-L-methionine + H(+) = S-adenosyl 3-(methylsulfanyl)propylamine + CO2. The protein operates within amine and polyamine biosynthesis; S-adenosylmethioninamine biosynthesis; S-adenosylmethioninamine from S-adenosyl-L-methionine: step 1/1. Functionally, catalyzes the decarboxylation of S-adenosylmethionine to S-adenosylmethioninamine (dcAdoMet), the propylamine donor required for the synthesis of the polyamines spermine and spermidine from the diamine putrescine. The polypeptide is S-adenosylmethionine decarboxylase proenzyme (Chromohalobacter salexigens (strain ATCC BAA-138 / DSM 3043 / CIP 106854 / NCIMB 13768 / 1H11)).